A 279-amino-acid polypeptide reads, in one-letter code: Large ribosomal subunit protein uL2 (279 aa).

A disordered region spans residues 223–279 (PVAMNPVDHPMGGGEGRASGGHPRSRKGLPAKGFKTRSRTKASNKYIVERRKTRKKK). A compositionally biased stretch (basic residues) spans 245 to 264 (PRSRKGLPAKGFKTRSRTKA).

The protein belongs to the universal ribosomal protein uL2 family. Part of the 50S ribosomal subunit. Forms a bridge to the 30S subunit in the 70S ribosome.

Its function is as follows. One of the primary rRNA binding proteins. Required for association of the 30S and 50S subunits to form the 70S ribosome, for tRNA binding and peptide bond formation. It has been suggested to have peptidyltransferase activity; this is somewhat controversial. Makes several contacts with the 16S rRNA in the 70S ribosome. This chain is Large ribosomal subunit protein uL2, found in Christiangramia forsetii (strain DSM 17595 / CGMCC 1.15422 / KT0803) (Gramella forsetii).